Consider the following 345-residue polypeptide: N-acetyl-gamma-glutamyl-phosphate reductase (345 aa).

Cys149 is a catalytic residue.

Belongs to the NAGSA dehydrogenase family. Type 1 subfamily.

Its subcellular location is the cytoplasm. It catalyses the reaction N-acetyl-L-glutamate 5-semialdehyde + phosphate + NADP(+) = N-acetyl-L-glutamyl 5-phosphate + NADPH + H(+). The protein operates within amino-acid biosynthesis; L-arginine biosynthesis; N(2)-acetyl-L-ornithine from L-glutamate: step 3/4. Its function is as follows. Catalyzes the NADPH-dependent reduction of N-acetyl-5-glutamyl phosphate to yield N-acetyl-L-glutamate 5-semialdehyde. The protein is N-acetyl-gamma-glutamyl-phosphate reductase of Marinobacter nauticus (strain ATCC 700491 / DSM 11845 / VT8) (Marinobacter aquaeolei).